A 317-amino-acid polypeptide reads, in one-letter code: Ribosomal protein L11 methyltransferase (317 aa).

Threonine 158, glycine 179, aspartate 201, and asparagine 244 together coordinate S-adenosyl-L-methionine.

It belongs to the methyltransferase superfamily. PrmA family.

It is found in the cytoplasm. The catalysed reaction is L-lysyl-[protein] + 3 S-adenosyl-L-methionine = N(6),N(6),N(6)-trimethyl-L-lysyl-[protein] + 3 S-adenosyl-L-homocysteine + 3 H(+). Functionally, methylates ribosomal protein L11. This is Ribosomal protein L11 methyltransferase from Streptococcus thermophilus (strain CNRZ 1066).